A 422-amino-acid polypeptide reads, in one-letter code: p-hydroxyphenylacetate 3-hydroxylase, oxygenase component (422 aa).

Residue W112 coordinates FMN. Substrate is bound by residues H120 and S146. Residues 146–148 (SSI) and 169–171 (WSS) contribute to the FMN site. 263–266 (RPYF) is a substrate binding site. Residues R292, Y296, 374-375 (AT), and 396-397 (HA) each bind FMN. A substrate-binding site is contributed by Y296.

It belongs to the HpaH/HsaA monooxygenase family. As to quaternary structure, homotetramer. The p-hydroxyphenylacetate 3-hydroxylase (HpaH) is composed of an oxygenase component C2 and a reductase component C1.

It carries out the reaction 4-hydroxyphenylacetate + FMNH2 + O2 = 3,4-dihydroxyphenylacetate + FMN + H2O + H(+). The catalysed reaction is 4-hydroxyphenylacetate + FADH2 + O2 = 3,4-dihydroxyphenylacetate + FAD + H2O + H(+). It functions in the pathway aromatic compound metabolism; 4-hydroxyphenylacetate degradation; pyruvate and succinate semialdehyde from 4-hydroxyphenylacetate: step 1/7. Its activity is regulated as follows. Inhibited by flavin concentrations greater than 15 uM. Also inhibited by excess p-hydroxyphenylacetate (HPA). In terms of biological role, oxygenase component of a two-component system that utilizes reduced FMN (FMNH2) supplied by the reductase component to catalyze the hydroxylation of 4-hydroxyphenylacetic acid, leading to the production of 3,4-dihydroxyphenylacetate (3,4-DHPA). Also utilizes other reduced flavins such as FADH2 and reduced riboflavin to a lesser extent. Only the compounds with a hydroxyl group in the para (p-) position can be hydroxylated. May also oxidize phenol to catechol, and hydroxylate other phenol derivatives. The protein is p-hydroxyphenylacetate 3-hydroxylase, oxygenase component of Acinetobacter baumannii.